A 37-amino-acid chain; its full sequence is Conotoxin Bt1.8 (37 aa).

The propeptide occupies 1 to 20; it reads PDGRNAAAKAFDLITPTVRK. 2 cysteine pairs are disulfide-bonded: Cys-22/Cys-28 and Cys-23/Cys-36. Cys-36 carries the cysteine amide modification.

This sequence belongs to the conotoxin A superfamily. As to expression, expressed by the venom duct.

It localises to the secreted. Functionally, alpha-conotoxins bind to the nicotinic acetylcholine receptors (nAChR) and inhibit them. This toxin inhibits mammalian alpha-3-beta-2/CHRNA3-CHRNB2 nAChR (IC(50)=9.4 nM (rat), IC(50)=8.8 nM (human)), as well as the subunit chimera alpha-6/alpha-3-beta-2-beta-3 nAChR (CHRNA6/CHRNA3-CHRNB2-CHRNB3)(IC(50)=2.1 nM (rat), IC(50)=1.7 nM (human)). Binds to rat alpha-6/alpha-3-beta-2-beta-3 more rapidly than to alpha-3-beta-2, and dissociates more rapidly from alpha-3-beta-2 than from alpha-6/alpha-3-beta-2-beta-3. This chain is Conotoxin Bt1.8, found in Conus betulinus (Beech cone).